The following is a 366-amino-acid chain: Ferredoxin--NADP reductase (366 aa).

Asp51, Gln59, Tyr64, Val104, Phe139, Asp308, and Thr349 together coordinate FAD.

It belongs to the ferredoxin--NADP reductase type 2 family. As to quaternary structure, homodimer. FAD is required as a cofactor.

The catalysed reaction is 2 reduced [2Fe-2S]-[ferredoxin] + NADP(+) + H(+) = 2 oxidized [2Fe-2S]-[ferredoxin] + NADPH. The chain is Ferredoxin--NADP reductase from Methylibium petroleiphilum (strain ATCC BAA-1232 / LMG 22953 / PM1).